A 158-amino-acid chain; its full sequence is Transcription elongation factor GreA (158 aa).

A coiled-coil region spans residues 1–67 (MSNNIPLTKE…FIEGRIQELQ (67 aa)).

Belongs to the GreA/GreB family.

Necessary for efficient RNA polymerase transcription elongation past template-encoded arresting sites. The arresting sites in DNA have the property of trapping a certain fraction of elongating RNA polymerases that pass through, resulting in locked ternary complexes. Cleavage of the nascent transcript by cleavage factors such as GreA or GreB allows the resumption of elongation from the new 3'terminus. GreA releases sequences of 2 to 3 nucleotides. The sequence is that of Transcription elongation factor GreA from Trichlorobacter lovleyi (strain ATCC BAA-1151 / DSM 17278 / SZ) (Geobacter lovleyi).